We begin with the raw amino-acid sequence, 371 residues long: 4-hydroxy-3-methylbut-2-en-1-yl diphosphate synthase (flavodoxin) (371 aa).

4 residues coordinate [4Fe-4S] cluster: Cys272, Cys275, Cys307, and Glu314.

This sequence belongs to the IspG family. Requires [4Fe-4S] cluster as cofactor.

It carries out the reaction (2E)-4-hydroxy-3-methylbut-2-enyl diphosphate + oxidized [flavodoxin] + H2O + 2 H(+) = 2-C-methyl-D-erythritol 2,4-cyclic diphosphate + reduced [flavodoxin]. It participates in isoprenoid biosynthesis; isopentenyl diphosphate biosynthesis via DXP pathway; isopentenyl diphosphate from 1-deoxy-D-xylulose 5-phosphate: step 5/6. Its function is as follows. Converts 2C-methyl-D-erythritol 2,4-cyclodiphosphate (ME-2,4cPP) into 1-hydroxy-2-methyl-2-(E)-butenyl 4-diphosphate. This is 4-hydroxy-3-methylbut-2-en-1-yl diphosphate synthase (flavodoxin) from Pseudomonas aeruginosa (strain LESB58).